The primary structure comprises 220 residues: Response regulator protein TmoT (220 aa).

In terms of domain architecture, Response regulatory spans 21–135 (VIYIVDDDNA…DLLGAIRTAL (115 aa)). Asp-70 is modified (4-aspartylphosphate). Positions 151–216 (LKASYESLSK…DLVRVTERLK (66 aa)) constitute an HTH luxR-type domain. Positions 175-194 (NKQTALELDISEATVKVHRH) form a DNA-binding region, H-T-H motif.

In terms of processing, phosphorylated by TmoS.

The protein resides in the cytoplasm. In terms of biological role, member of the two-component regulatory system TmoS/TmoT involved in the regulation of toluene degradation. Induces expression of tmoX operon. In Ectopseudomonas mendocina (Pseudomonas mendocina), this protein is Response regulator protein TmoT (tmoT).